A 496-amino-acid polypeptide reads, in one-letter code: Glycylpeptide N-tetradecanoyltransferase 1 (496 aa).

The segment at 1–82 (MADESETAVK…SAQDQPVKMN (82 aa)) is disordered. Phosphoserine occurs at positions 31 and 47. The span at 55–66 (KKKKKKQKKKKE) shows a compositional bias: basic residues. Residue serine 83 is modified to Phosphoserine. Tetradecanoyl-CoA is bound by residues glutamine 118, phenylalanine 119, tryptophan 120, phenylalanine 247, leucine 248, cysteine 249, valine 250, serine 256, arginine 258, valine 259, and alanine 260.

Belongs to the NMT family. As to expression, heart, gut, kidney, liver and placenta.

Its subcellular location is the cytoplasm. It localises to the cytosol. The protein localises to the membrane. The catalysed reaction is N-terminal glycyl-[protein] + tetradecanoyl-CoA = N-tetradecanoylglycyl-[protein] + CoA + H(+). It catalyses the reaction N-terminal glycyl-L-lysyl-[protein] + tetradecanoyl-CoA = N-terminal glycyl-(N(6)-tetradecanoyl)-L-lysyl-[protein] + CoA + H(+). In terms of biological role, adds a myristoyl group to the N-terminal glycine residue of certain cellular and viral proteins. Also able to mediate N-terminal lysine myristoylation of proteins: catalyzes myristoylation of ARF6 on both 'Gly-2' and 'Lys-3'. Lysine myristoylation is required to maintain ARF6 on membranes during the GTPase cycle. The chain is Glycylpeptide N-tetradecanoyltransferase 1 from Homo sapiens (Human).